The chain runs to 139 residues: Small ribosomal subunit protein uS12 (139 aa).

The interval Met1 to Ala21 is disordered. The segment covering Ile8 to Lys18 has biased composition (basic residues). At Asp102 the chain carries 3-methylthioaspartic acid.

Belongs to the universal ribosomal protein uS12 family. Part of the 30S ribosomal subunit. Contacts proteins S8 and S17. May interact with IF1 in the 30S initiation complex.

Its function is as follows. With S4 and S5 plays an important role in translational accuracy. In terms of biological role, interacts with and stabilizes bases of the 16S rRNA that are involved in tRNA selection in the A site and with the mRNA backbone. Located at the interface of the 30S and 50S subunits, it traverses the body of the 30S subunit contacting proteins on the other side and probably holding the rRNA structure together. The combined cluster of proteins S8, S12 and S17 appears to hold together the shoulder and platform of the 30S subunit. The polypeptide is Small ribosomal subunit protein uS12 (Aster yellows witches'-broom phytoplasma (strain AYWB)).